Consider the following 348-residue polypeptide: Sulfate/thiosulfate import ATP-binding protein CysA (348 aa).

In terms of domain architecture, ABC transporter spans 3–237 (IEIRNITKSF…PATPFVCQFI (235 aa)). 35–42 (GPSGCGKT) lines the ATP pocket.

It belongs to the ABC transporter superfamily. Sulfate/tungstate importer (TC 3.A.1.6) family. As to quaternary structure, the complex is composed of two ATP-binding proteins (CysA), two transmembrane proteins (CysT and CysW) and a solute-binding protein (CysP).

Its subcellular location is the cell inner membrane. The enzyme catalyses sulfate(out) + ATP + H2O = sulfate(in) + ADP + phosphate + H(+). It carries out the reaction thiosulfate(out) + ATP + H2O = thiosulfate(in) + ADP + phosphate + H(+). Part of the ABC transporter complex CysAWTP involved in sulfate/thiosulfate import. Responsible for energy coupling to the transport system. The chain is Sulfate/thiosulfate import ATP-binding protein CysA from Methylococcus capsulatus (strain ATCC 33009 / NCIMB 11132 / Bath).